The chain runs to 178 residues: Caveolin-1 (178 aa).

An N-acetylserine modification is found at serine 2. At serine 2 the chain carries Phosphoserine. Positions serine 2–valine 94 are required for homooligomerization. Residues serine 2–serine 104 lie on the Cytoplasmic side of the membrane. Lysine 5 bears the N6-acetyllysine; alternate mark. A Glycyl lysine isopeptide (Lys-Gly) (interchain with G-Cter in ubiquitin); alternate cross-link involves residue lysine 5. Tyrosine 6 bears the Phosphotyrosine mark. Position 9 is a phosphoserine (serine 9). Tyrosine 14 carries the post-translational modification Phosphotyrosine; by ABL1. At tyrosine 25 the chain carries Phosphotyrosine. Residues lysine 26, lysine 30, lysine 39, lysine 47, and lysine 57 each participate in a glycyl lysine isopeptide (Lys-Gly) (interchain with G-Cter in ubiquitin) cross-link. Residues aspartate 82–valine 94 are interaction with CAVIN3. The segment at residues alanine 105 to leucine 125 is an intramembrane region (helical). Topologically, residues histidine 126–isoleucine 178 are cytoplasmic. The interacts with SPRY1, SPRY2, SPRY3 and SPRY4 stretch occupies residues valine 131–glutamine 142. Residues cysteine 143 and cysteine 156 are each lipidated (S-palmitoyl cysteine). The segment at serine 149–phenylalanine 160 is interacts with SPRY1, SPRY2, and SPRY4. Residues phenylalanine 167–isoleucine 178 form an interacts with SPRY1, SPRY2, SPRY3 and SPRY4 region.

This sequence belongs to the caveolin family. Homooligomer. Interacts (via the N-terminus) with DPP4; the interaction is direct. Forms a stable heterooligomeric complex with CAV2 that targets to lipid rafts and drives caveolae formation. Interacts with PACSIN2; this interaction induces membrane tubulation. Interacts with BMX, BTK, CTNNB1, CDH1, GLIPR2, JUP, NOSTRIN, SNAP25 and STX1A. Interacts with SLC7A9. Interacts with TGFBR1. Interacts with CAVIN3 (via leucine-zipper domain) in a cholesterol-sensitive manner. Interacts with CAVIN1. Interacts with EHD2 in a cholesterol-dependent manner. Forms a ternary complex with UBXN6 and VCP; mediates CAV1 targeting to lysosomes for degradation. Interacts with ABCG1; this interaction regulates ABCG1-mediated cholesterol efflux. Interacts with NEU3; this interaction enhances NEU3 sialidase activity within caveola. Interacts (via C-terminus) with SPRY1, SPRY2 (via C-terminus), SPRY3, and SPRY4. Post-translationally, phosphorylated at Tyr-14 by ABL1 in response to oxidative stress. Ubiquitinated. Undergo monoubiquitination and multi- and/or polyubiquitination. Monoubiquitination of N-terminal lysines promotes integration in a ternary complex with UBXN6 and VCP which promotes oligomeric CAV1 targeting to lysosomes for degradation. Ubiquitinated by ZNRF1; leading to degradation and modulation of the TLR4-mediated immune response.

It is found in the golgi apparatus membrane. The protein resides in the cell membrane. Its subcellular location is the membrane. It localises to the caveola. The protein localises to the membrane raft. May act as a scaffolding protein within caveolar membranes. Forms a stable heterooligomeric complex with CAV2 that targets to lipid rafts and drives caveolae formation. Mediates the recruitment of CAVIN proteins (CAVIN1/2/3/4) to the caveolae. Interacts directly with G-protein alpha subunits and can functionally regulate their activity. Involved in the costimulatory signal essential for T-cell receptor (TCR)-mediated T-cell activation. Its binding to DPP4 induces T-cell proliferation and NF-kappa-B activation in a T-cell receptor/CD3-dependent manner. Recruits CTNNB1 to caveolar membranes and may regulate CTNNB1-mediated signaling through the Wnt pathway. Negatively regulates TGFB1-mediated activation of SMAD2/3 by mediating the internalization of TGFBR1 from membrane rafts leading to its subsequent degradation. Binds 20(S)-hydroxycholesterol (20(S)-OHC). This is Caveolin-1 (CAV1) from Rhinolophus ferrumequinum (Greater horseshoe bat).